Consider the following 160-residue polypeptide: Large ribosomal subunit protein uL16 (160 aa).

Residues 138-148 (KNLEVSSQENT) are compositionally biased toward polar residues. Residues 138-160 (KNLEVSSQENTKNNKESQEEVKQ) are disordered. Basic and acidic residues predominate over residues 149 to 160 (KNNKESQEEVKQ).

Belongs to the universal ribosomal protein uL16 family. In terms of assembly, part of the 50S ribosomal subunit.

In terms of biological role, binds 23S rRNA and is also seen to make contacts with the A and possibly P site tRNAs. In Prochlorococcus marinus (strain MIT 9312), this protein is Large ribosomal subunit protein uL16.